We begin with the raw amino-acid sequence, 253 residues long: Phycobilisome rod-core linker polypeptide CpcG4 (253 aa).

The PBS-linker domain occupies serine 11–glutamine 191.

Belongs to the phycobilisome linker protein family. As to quaternary structure, part of the phycobilisome, a hemidiscoidal structure that is composed of two distinct substructures: a core complex and a number of rods radiating from the core.

It is found in the cellular thylakoid membrane. Its function is as follows. Rod-core linker protein required for attachment of phycocyanin to allophycocyanin in cores of phycobilisomes. In terms of biological role, linker polypeptides determine the state of aggregation and the location of the disk-shaped phycobiliprotein units within the phycobilisome and modulate their spectroscopic properties in order to mediate a directed and optimal energy transfer. The chain is Phycobilisome rod-core linker polypeptide CpcG4 from Nostoc sp. (strain PCC 7120 / SAG 25.82 / UTEX 2576).